The primary structure comprises 288 residues: Eukaryotic translation initiation factor 3 subunit G (288 aa).

Disordered stretches follow at residues 1 to 33 (MSKL…NKDG) and 156 to 197 (DEPT…GGER). The RRM domain occupies 208-286 (ATLRVTNVSE…LILRVEFAKR (79 aa)).

The protein belongs to the eIF-3 subunit G family. Component of the eukaryotic translation initiation factor 3 (eIF-3) complex.

It is found in the cytoplasm. In terms of biological role, RNA-binding component of the eukaryotic translation initiation factor 3 (eIF-3) complex, which is involved in protein synthesis of a specialized repertoire of mRNAs and, together with other initiation factors, stimulates binding of mRNA and methionyl-tRNAi to the 40S ribosome. The eIF-3 complex specifically targets and initiates translation of a subset of mRNAs involved in cell proliferation. This subunit can bind 18S rRNA. This Aspergillus niger (strain ATCC MYA-4892 / CBS 513.88 / FGSC A1513) protein is Eukaryotic translation initiation factor 3 subunit G (tif35).